We begin with the raw amino-acid sequence, 261 residues long: Imidazole glycerol phosphate synthase subunit HisF (261 aa).

Catalysis depends on residues D16 and D135.

This sequence belongs to the HisA/HisF family. Heterodimer of HisH and HisF.

The protein localises to the cytoplasm. The catalysed reaction is 5-[(5-phospho-1-deoxy-D-ribulos-1-ylimino)methylamino]-1-(5-phospho-beta-D-ribosyl)imidazole-4-carboxamide + L-glutamine = D-erythro-1-(imidazol-4-yl)glycerol 3-phosphate + 5-amino-1-(5-phospho-beta-D-ribosyl)imidazole-4-carboxamide + L-glutamate + H(+). The protein operates within amino-acid biosynthesis; L-histidine biosynthesis; L-histidine from 5-phospho-alpha-D-ribose 1-diphosphate: step 5/9. In terms of biological role, IGPS catalyzes the conversion of PRFAR and glutamine to IGP, AICAR and glutamate. The HisF subunit catalyzes the cyclization activity that produces IGP and AICAR from PRFAR using the ammonia provided by the HisH subunit. The protein is Imidazole glycerol phosphate synthase subunit HisF of Mycobacterium sp. (strain JLS).